Reading from the N-terminus, the 888-residue chain is Valine--tRNA ligase (888 aa).

The 'HIGH' region motif lies at 43–53 (PNVTGTLHLGH). The short motif at 538–542 (KMSKS) is the 'KMSKS' region element. K541 is a binding site for ATP. A coiled-coil region spans residues 821 to 888 (LIDLDAERAR…RLKAALGRLA (68 aa)).

It belongs to the class-I aminoacyl-tRNA synthetase family. ValS type 1 subfamily. In terms of assembly, monomer.

The protein resides in the cytoplasm. It carries out the reaction tRNA(Val) + L-valine + ATP = L-valyl-tRNA(Val) + AMP + diphosphate. Functionally, catalyzes the attachment of valine to tRNA(Val). As ValRS can inadvertently accommodate and process structurally similar amino acids such as threonine, to avoid such errors, it has a 'posttransfer' editing activity that hydrolyzes mischarged Thr-tRNA(Val) in a tRNA-dependent manner. The polypeptide is Valine--tRNA ligase (Gluconobacter oxydans (strain 621H) (Gluconobacter suboxydans)).